Consider the following 484-residue polypeptide: PTS system MurNAc-GlcNAc-specific EIIBC component (484 aa).

A PTS EIIB type-1 domain is found at 5-87 (QQLAERIIAA…AELSGVKLGD (83 aa)). The active-site Phosphocysteine intermediate; for EIIB activity is cysteine 27. The region spanning 130 to 484 (KSIANIFIPL…AMRQTDLLGD (355 aa)) is the PTS EIIC type-1 domain. 10 consecutive transmembrane segments (helical) span residues 135-155 (IFIP…IAAV), 160-180 (MVAG…FNVI), 200-220 (FGAT…TGIA), 234-254 (LQPG…LSIV), 274-294 (IALL…AGFV), 305-325 (IISI…LPLV), 349-369 (LLPI…ALWV), 384-404 (ALPV…TLPL), 408-428 (FLTA…IGHI), and 450-470 (LGYI…TYLF).

It is found in the cell membrane. The enzyme catalyses N-acetyl-beta-D-muramate-(1-&gt;4)-N-acetyl-D-glucosamine(out) + N(pros)-phospho-L-histidyl-[protein] = 6-phospho-N-acetyl-beta-D-muramate-(1-&gt;4)-N-acetyl-D-glucosamine(in) + L-histidyl-[protein]. The protein operates within cell wall biogenesis; peptidoglycan recycling. Its function is as follows. The phosphoenolpyruvate-dependent sugar phosphotransferase system (sugar PTS), a major carbohydrate active transport system, catalyzes the phosphorylation of incoming sugar substrates concomitantly with their translocation across the cell membrane. This system is involved in the uptake and phosphorylation of MurNAc-GlcNAc, the principle peptidoglycan turnover product of S.aureus, yielding cytoplasmic MurNAc 6P-GlcNAc. This is PTS system MurNAc-GlcNAc-specific EIIBC component from Staphylococcus aureus (strain Mu50 / ATCC 700699).